Reading from the N-terminus, the 447-residue chain is Exodeoxyribonuclease 7 large subunit (447 aa).

Belongs to the XseA family. Heterooligomer composed of large and small subunits.

It localises to the cytoplasm. It catalyses the reaction Exonucleolytic cleavage in either 5'- to 3'- or 3'- to 5'-direction to yield nucleoside 5'-phosphates.. Its function is as follows. Bidirectionally degrades single-stranded DNA into large acid-insoluble oligonucleotides, which are then degraded further into small acid-soluble oligonucleotides. This is Exodeoxyribonuclease 7 large subunit from Exiguobacterium sibiricum (strain DSM 17290 / CCUG 55495 / CIP 109462 / JCM 13490 / 255-15).